The sequence spans 478 residues: Ribosomal RNA small subunit methyltransferase F (478 aa).

Residues 125–131 (AAAPGSK), Glu-149, Asp-176, and Asp-194 each bind S-adenosyl-L-methionine. The Nucleophile role is filled by Cys-247.

Belongs to the class I-like SAM-binding methyltransferase superfamily. RsmB/NOP family.

The protein resides in the cytoplasm. It carries out the reaction cytidine(1407) in 16S rRNA + S-adenosyl-L-methionine = 5-methylcytidine(1407) in 16S rRNA + S-adenosyl-L-homocysteine + H(+). In terms of biological role, specifically methylates the cytosine at position 1407 (m5C1407) of 16S rRNA. The protein is Ribosomal RNA small subunit methyltransferase F of Serratia proteamaculans (strain 568).